We begin with the raw amino-acid sequence, 473 residues long: PTS system trehalose-specific EIIBC component (473 aa).

The PTS EIIB type-1 domain occupies 1–89 (MMSKINQTDI…IASTGQAQVD (89 aa)). Topologically, residues 1–110 (MMSKINQTDI…MKWHEQLISH (110 aa)) are cytoplasmic. The active-site Phosphocysteine intermediate; for EIIB activity is Cys-29. Position 29 is a phosphocysteine; by EIIA (Cys-29). The 365-residue stretch at 109-473 (SHFAVIFFPL…KYRLGTLDIV (365 aa)) folds into the PTS EIIC type-1 domain. The helical transmembrane segment at 111–131 (FAVIFFPLLPALISGGLILGF) threads the bilayer. The Periplasmic segment spans residues 132–158 (RNVIGDLPMSNGQTLAQMYPSLQTIYD). The helical transmembrane segment at 159–179 (FLWLIGEAIFFYLPVGICWSA) threads the bilayer. Residues 180–187 (VKKMGGTP) lie on the Cytoplasmic side of the membrane. A helical membrane pass occupies residues 188-208 (ILGIVLGVTLVSPQLMNAYLL). Over 209–225 (GQQLPEVWDFGMFSIAK) the chain is Periplasmic. Residues 226–246 (VGYQAQVIPALLAGLALGVIE) traverse the membrane as a helical segment. At 247–258 (TRLKRIVPDYLY) the chain is on the cytoplasmic side. The helical transmembrane segment at 259–279 (LVVVPVCSLILAVFLAHALIG) threads the bilayer. The Periplasmic segment spans residues 280–300 (PFGRMIGDGVAFAVRHLMTGS). A helical membrane pass occupies residues 301 to 321 (FAPIGAALFGFLYAPLVITGV). Residues 322-340 (HQTTLAIDLQMIQSMGGTP) lie on the Cytoplasmic side of the membrane. Residues 341-361 (VWPLIALSNIAQGSAVIGIII) traverse the membrane as a helical segment. At 362-370 (SSRKHNERE) the chain is on the periplasmic side. Residues 371–391 (ISVPAAISAWLGVTEPAMYGI) traverse the membrane as a helical segment. Topologically, residues 392–398 (NLKYRFP) are cytoplasmic. Residues 399-419 (MLCAMIGSGLAGLLCGLNGVM) traverse the membrane as a helical segment. The Periplasmic segment spans residues 420–440 (ANGIGVGGLPGILSIQPSYWQ). The helical transmembrane segment at 441–461 (VFALAMAIAIIIPIVLTSFIY) threads the bilayer. The Cytoplasmic segment spans residues 462-473 (QRKYRLGTLDIV).

The protein localises to the cell inner membrane. The enzyme catalyses alpha,alpha-trehalose(out) + N(pros)-phospho-L-histidyl-[protein] = alpha,alpha-trehalose 6-phosphate(in) + L-histidyl-[protein]. Its function is as follows. The phosphoenolpyruvate-dependent sugar phosphotransferase system (sugar PTS), a major carbohydrate active transport system, catalyzes the phosphorylation of incoming sugar substrates concomitantly with their translocation across the cell membrane. This system is involved in trehalose transport at low osmolarity. The polypeptide is PTS system trehalose-specific EIIBC component (treB) (Escherichia coli (strain K12)).